The following is a 1709-amino-acid chain: Acrosomal protein KIAA1210 (1709 aa).

Disordered regions lie at residues 207–226, 239–275, 451–663, 763–973, 1211–1382, 1408–1516, 1539–1571, and 1589–1653; these read PVRE…GSKA, PERS…SKVP, PNLD…AEKT, PPRS…MAVE, LKRG…SVNA, TKKF…GRGH, ADKQ…QSDY, and FKAH…KSVG. A compositionally biased stretch (basic residues) spans 257-272; that stretch reads PQQRSHISRTLPKPRS. The segment covering 473-490 has biased composition (basic and acidic residues); the sequence is EEEKSITKPKEINEKKLG. 2 stretches are compositionally biased toward polar residues: residues 494 to 505 and 514 to 527; these read ADSSSQKQNNKT and DQAP…SQGY. Residues 595–608 show a composition bias toward low complexity; that stretch reads EQPTTSQPETTTPQ. Basic and acidic residues predominate over residues 651–663; the sequence is PYHEDAASGAEKT. Residues 777–794 are compositionally biased toward acidic residues; the sequence is EEVSSDSENIPEEGDGSE. 5 stretches are compositionally biased toward polar residues: residues 886-941, 1288-1299, 1332-1350, 1366-1376, and 1457-1469; these read KNQQ…QSDS, FKEQLSPRQLSQ, HSSQ…SSKG, PSSSPFQQQVH, and DGNN…LSNQ. The span at 1502 to 1513 shows a compositional bias: low complexity; it reads SVPSGPISSSVG. The segment covering 1542–1552 has biased composition (basic and acidic residues); sequence QQSRPKSESMA.

Interacts with TOP2B.

It localises to the cytoplasmic vesicle. The protein localises to the secretory vesicle. It is found in the acrosome. The protein is Acrosomal protein KIAA1210 of Homo sapiens (Human).